A 471-amino-acid chain; its full sequence is MKNKWYKPKRHWKEIELWKDVPEEKWNDWLWQLTHTVRTLDDLKKVINLTEDEEEGVRISTKTIPLNITPYYASLMDPDNPRCPVRMQSVPLSEEMHKTKYDLEDPLHEDEDSPVPGLTHRYPDRVLFLVTNQCSMYCRYCTRRRFSGQIGMGVPKKQLDAAIAYIRETPEIRDCLISGGDGLLINDQILEYILKELRSIPHLEVIRIGTRAPVVFPQRITDHLCEILKKYHPVWLNTHFNTSIEMTEESVEACEKLVNAGVPVGNQAVVLAGINDSVPIMKKLMHDLVKIRVRPYYIYQCDLSEGIGHFRAPVSKGLEIIEGLRGHTSGYAVPTFVVDAPGGGGKIALQPNYVLSQSPDKVILRNFEGVITSYPEPENYIPNQADAYFESVFPETADKKEPIGLSAIFADKEVSFTPENVDRIKRREAYIANPEHETLKDRREKRDQLKEKKFLAQQKKQKETECGGDSS.

Positions 120-332 constitute a Radical SAM core domain; that stretch reads HRYPDRVLFL…GLRGHTSGYA (213 aa). The [4Fe-4S] cluster site is built by cysteine 134, cysteine 138, and cysteine 141. Lysine 346 is subject to N6-(pyridoxal phosphate)lysine.

Belongs to the radical SAM superfamily. KamA family. Homotetramer. Requires [4Fe-4S] cluster as cofactor. Pyridoxal 5'-phosphate serves as cofactor.

The enzyme catalyses L-lysine = (3S)-3,6-diaminohexanoate. Its pathway is amino-acid degradation; L-lysine degradation via acetate pathway. Its function is as follows. Catalyzes the interconversion of L-alpha-lysine and L-beta-lysine. The chain is L-lysine 2,3-aminomutase (kamA) from Bacillus subtilis (strain 168).